The sequence spans 89 residues: Acylphosphatase (89 aa).

Residues 3-89 (QKHLQVFGTV…SEDFSDFKSI (87 aa)) enclose the Acylphosphatase-like domain. Residues Arg18 and Asn36 contribute to the active site.

Belongs to the acylphosphatase family.

The catalysed reaction is an acyl phosphate + H2O = a carboxylate + phosphate + H(+). The chain is Acylphosphatase (acyP) from Staphylococcus haemolyticus (strain JCSC1435).